Here is a 549-residue protein sequence, read N- to C-terminus: Lipase 4 (549 aa).

The first 15 residues, 1–15, serve as a signal peptide directing secretion; that stretch reads MKLALVLSLIVSVAA. Residues C75 and C112 are joined by a disulfide bond. The active-site Acyl-ester intermediate is S224. Cysteines 283 and 292 form a disulfide. Catalysis depends on E356, which acts as the Charge relay system. The N-linked (GlcNAc...) asparagine glycan is linked to N366. The active-site Charge relay system is the H464.

It belongs to the type-B carboxylesterase/lipase family.

The catalysed reaction is a triacylglycerol + H2O = a diacylglycerol + a fatty acid + H(+). The protein is Lipase 4 (LIP4) of Diutina rugosa (Yeast).